Reading from the N-terminus, the 71-residue chain is MPEKDTGGQHRATRRTEEHDETIDEATATSDVQERREKLDADVDAILDEIDDVLEENAEEFVRSYIQKGGE.

Positions 1–18 (MPEKDTGGQHRATRRTEE) are enriched in basic and acidic residues. The tract at residues 1 to 36 (MPEKDTGGQHRATRRTEEHDETIDEATATSDVQERR) is disordered. The interval 27–65 (TATSDVQERREKLDADVDAILDEIDDVLEENAEEFVRSY) is ARC ATPase binding. Residues 30–59 (SDVQERREKLDADVDAILDEIDDVLEENAE) are a coiled coil. Glutamate 71 is covalently cross-linked (Isoglutamyl lysine isopeptide (Glu-Lys) (interchain with K-? in acceptor proteins)).

The protein belongs to the prokaryotic ubiquitin-like protein family. As to quaternary structure, strongly interacts with the proteasome-associated ATPase ARC through a hydrophobic interface; the interacting region of Pup lies in its C-terminal half. There is one Pup binding site per ARC hexamer ring.

It functions in the pathway protein degradation; proteasomal Pup-dependent pathway. Functionally, protein modifier that is covalently attached to lysine residues of substrate proteins, thereby targeting them for proteasomal degradation. The tagging system is termed pupylation. In Acidothermus cellulolyticus (strain ATCC 43068 / DSM 8971 / 11B), this protein is Prokaryotic ubiquitin-like protein Pup.